The primary structure comprises 398 residues: Phosphoglycerate kinase (398 aa).

Substrate contacts are provided by residues 21 to 23 (DFN), Arg36, 59 to 62 (HLGR), Arg119, and Arg157. ATP-binding positions include Lys208, Gly296, Glu327, and 354–357 (GGDS).

This sequence belongs to the phosphoglycerate kinase family. Monomer.

It localises to the cytoplasm. The enzyme catalyses (2R)-3-phosphoglycerate + ATP = (2R)-3-phospho-glyceroyl phosphate + ADP. Its pathway is carbohydrate degradation; glycolysis; pyruvate from D-glyceraldehyde 3-phosphate: step 2/5. The polypeptide is Phosphoglycerate kinase (Streptococcus pneumoniae serotype 4 (strain ATCC BAA-334 / TIGR4)).